The chain runs to 347 residues: Quinolinate synthase (347 aa).

Residues His47 and Ser68 each coordinate iminosuccinate. Residue Cys113 participates in [4Fe-4S] cluster binding. Iminosuccinate-binding positions include 139–141 and Ser156; that span reads YAN. A [4Fe-4S] cluster-binding site is contributed by Cys200. Iminosuccinate is bound by residues 226–228 and Thr243; that span reads HPE. Cys297 serves as a coordination point for [4Fe-4S] cluster.

The protein belongs to the quinolinate synthase family. Type 1 subfamily. The cofactor is [4Fe-4S] cluster.

Its subcellular location is the cytoplasm. The catalysed reaction is iminosuccinate + dihydroxyacetone phosphate = quinolinate + phosphate + 2 H2O + H(+). It functions in the pathway cofactor biosynthesis; NAD(+) biosynthesis; quinolinate from iminoaspartate: step 1/1. Its function is as follows. Catalyzes the condensation of iminoaspartate with dihydroxyacetone phosphate to form quinolinate. The sequence is that of Quinolinate synthase from Salmonella agona (strain SL483).